Consider the following 451-residue polypeptide: Bifunctional protein GlmU (451 aa).

A pyrophosphorylase region spans residues 1 to 236; sequence MDQTPSYSPP…YEELRGINSK (236 aa). UDP-N-acetyl-alpha-D-glucosamine contacts are provided by residues 17–20, Lys31, Gln79, 84–85, 105–107, Gly144, Glu162, Asn177, and Asn234; these read LAAG, GT, and YGD. Asp107 contributes to the Mg(2+) binding site. A Mg(2+)-binding site is contributed by Asn234. The tract at residues 237 to 257 is linker; that stretch reads VELAEAEATVQIVLRRKALEN. An N-acetyltransferase region spans residues 258–451; it reads GVTMTAPETV…EIRRQLKGSV (194 aa). Arg323 and Lys341 together coordinate UDP-N-acetyl-alpha-D-glucosamine. His353 acts as the Proton acceptor in catalysis. UDP-N-acetyl-alpha-D-glucosamine contacts are provided by Tyr356 and Asn367. Residues Ala370, 376–377, Ser395, Ala413, and Arg430 each bind acetyl-CoA; that span reads NY.

It in the N-terminal section; belongs to the N-acetylglucosamine-1-phosphate uridyltransferase family. This sequence in the C-terminal section; belongs to the transferase hexapeptide repeat family. As to quaternary structure, homotrimer. The cofactor is Mg(2+).

The protein resides in the cytoplasm. The catalysed reaction is alpha-D-glucosamine 1-phosphate + acetyl-CoA = N-acetyl-alpha-D-glucosamine 1-phosphate + CoA + H(+). It carries out the reaction N-acetyl-alpha-D-glucosamine 1-phosphate + UTP + H(+) = UDP-N-acetyl-alpha-D-glucosamine + diphosphate. It participates in nucleotide-sugar biosynthesis; UDP-N-acetyl-alpha-D-glucosamine biosynthesis; N-acetyl-alpha-D-glucosamine 1-phosphate from alpha-D-glucosamine 6-phosphate (route II): step 2/2. Its pathway is nucleotide-sugar biosynthesis; UDP-N-acetyl-alpha-D-glucosamine biosynthesis; UDP-N-acetyl-alpha-D-glucosamine from N-acetyl-alpha-D-glucosamine 1-phosphate: step 1/1. The protein operates within bacterial outer membrane biogenesis; LPS lipid A biosynthesis. Functionally, catalyzes the last two sequential reactions in the de novo biosynthetic pathway for UDP-N-acetylglucosamine (UDP-GlcNAc). The C-terminal domain catalyzes the transfer of acetyl group from acetyl coenzyme A to glucosamine-1-phosphate (GlcN-1-P) to produce N-acetylglucosamine-1-phosphate (GlcNAc-1-P), which is converted into UDP-GlcNAc by the transfer of uridine 5-monophosphate (from uridine 5-triphosphate), a reaction catalyzed by the N-terminal domain. The chain is Bifunctional protein GlmU from Granulibacter bethesdensis (strain ATCC BAA-1260 / CGDNIH1).